Here is a 210-residue protein sequence, read N- to C-terminus: Rho-related GTP-binding protein RhoD (210 aa).

24–31 (GDGGCGKT) contributes to the GTP binding site. An Effector region motif is present at residues 46-54 (YSPTVFERY). GTP-binding positions include 71–75 (DTAGQ) and 129–132 (CKID). The residue at position 207 (C207) is a Cysteine methyl ester. C207 carries S-geranylgeranyl cysteine lipidation. Positions 208–210 (LAT) are cleaved as a propeptide — removed in mature form.

The protein belongs to the small GTPase superfamily. Rho family. Interacts with PAK5. Interacts (in GTP-bound form) with DAPK3, FILIP1 and WHAMM. Interacts (independent of GTP-loaded status) with ANKFY1. Widely expressed.

The protein resides in the cell membrane. It is found in the early endosome. Involved in endosome dynamics. May coordinate membrane transport with the function of the cytoskeleton. Involved in the internalization and trafficking of activated tyrosine kinase receptors such as PDGFRB. Participates in the reorganization of actin cytoskeleton; the function seems to involve WHAMM and includes regulation of filopodia formation and actin filament bundling. Can modulate the effect of DAPK3 in reorganization of actin cytoskeleton and focal adhesion dissolution. In Mus musculus (Mouse), this protein is Rho-related GTP-binding protein RhoD (Rhod).